The primary structure comprises 297 residues: tRNA dimethylallyltransferase (297 aa).

Residue 10–17 (GITASGKS) participates in ATP binding. Position 12-17 (12-17 (TASGKS)) interacts with substrate. Positions 36 to 39 (DSKQ) are interaction with substrate tRNA.

It belongs to the IPP transferase family. In terms of assembly, monomer. Mg(2+) is required as a cofactor.

It catalyses the reaction adenosine(37) in tRNA + dimethylallyl diphosphate = N(6)-dimethylallyladenosine(37) in tRNA + diphosphate. Functionally, catalyzes the transfer of a dimethylallyl group onto the adenine at position 37 in tRNAs that read codons beginning with uridine, leading to the formation of N6-(dimethylallyl)adenosine (i(6)A). In Wolbachia pipientis subsp. Culex pipiens (strain wPip), this protein is tRNA dimethylallyltransferase.